The chain runs to 396 residues: Elongation factor Tu 2 (396 aa).

In terms of domain architecture, tr-type G spans 10–206 (KPHVNVGTIG…AIDSYIPEPE (197 aa)). Positions 19–26 (GHIDHGKT) are G1. A GTP-binding site is contributed by 19 to 26 (GHIDHGKT). Position 26 (Thr26) interacts with Mg(2+). Positions 60–64 (GITIA) are G2. Residues 81–84 (DCPG) form a G3 region. GTP-binding positions include 81-85 (DCPGH) and 136-139 (NKCD). The interval 136–139 (NKCD) is G4. Residues 174 to 176 (SAL) are G5.

It belongs to the TRAFAC class translation factor GTPase superfamily. Classic translation factor GTPase family. EF-Tu/EF-1A subfamily. In terms of assembly, monomer.

It localises to the cytoplasm. It catalyses the reaction GTP + H2O = GDP + phosphate + H(+). GTP hydrolase that promotes the GTP-dependent binding of aminoacyl-tRNA to the A-site of ribosomes during protein biosynthesis. This chain is Elongation factor Tu 2, found in Desulfotalea psychrophila (strain LSv54 / DSM 12343).